Here is a 175-residue protein sequence, read N- to C-terminus: Inorganic pyrophosphatase (175 aa).

Substrate-binding residues include lysine 30, arginine 44, and tyrosine 56. Residues aspartate 66, aspartate 71, and aspartate 103 each coordinate Mg(2+). A substrate-binding site is contributed by tyrosine 140.

Belongs to the PPase family. Homohexamer. Mg(2+) is required as a cofactor.

Its subcellular location is the cytoplasm. The enzyme catalyses diphosphate + H2O = 2 phosphate + H(+). Functionally, catalyzes the hydrolysis of inorganic pyrophosphate (PPi) forming two phosphate ions. The sequence is that of Inorganic pyrophosphatase from Thermus thermophilus (strain ATCC 27634 / DSM 579 / HB8).